Here is a 556-residue protein sequence, read N- to C-terminus: Genetic interactor of prohibitins 3, mitochondrial (556 aa).

A mitochondrion-targeting transit peptide spans 1–21 (MLNLCHALRGVRQFSCSVIVK). Residues 113-305 (ESTLNDILNY…LFDLPGYSTS (193 aa)) enclose the CP-type G domain.

This sequence belongs to the TRAFAC class YlqF/YawG GTPase family. GEP3 subfamily.

Its subcellular location is the mitochondrion. Functionally, interacts genetically with prohibitins and thus may be involved in the mitochondrial lipid metabolism. The chain is Genetic interactor of prohibitins 3, mitochondrial (GEP3) from Saccharomyces cerevisiae (strain AWRI1631) (Baker's yeast).